Consider the following 171-residue polypeptide: Putative defense protein (171 aa).

An N-terminal signal peptide occupies residues 1–23; the sequence is MKVYACLCAAVVMLVMTSRVSEA. A Reelin domain is found at 24–171; sequence RSTGAPLSAC…VQSAPIKIVS (148 aa). The cysteines at positions 33 and 110 are disulfide-linked. An N-linked (GlcNAc...) asparagine glycan is attached at asparagine 41.

The protein belongs to the insect defense protein family.

It is found in the secreted. Its function is as follows. May have antimicrobial activity. The sequence is that of Putative defense protein from Bombyx mori (Silk moth).